A 420-amino-acid polypeptide reads, in one-letter code: Adenylosuccinate synthetase (420 aa).

GTP contacts are provided by residues 11-17 (GDEGKGK) and 39-41 (GHT). Asp12 functions as the Proton acceptor in the catalytic mechanism. Residues Asp12 and Gly39 each contribute to the Mg(2+) site. Residues 12 to 15 (DEGK), 37 to 40 (NAGH), Thr129, Arg143, Asn218, Thr233, and Arg297 each bind IMP. The Proton donor role is filled by His40. 293–299 (VTTGRKR) lines the substrate pocket. GTP contacts are provided by residues Arg299, 325 to 327 (KLD), and 407 to 409 (GTG).

It belongs to the adenylosuccinate synthetase family. As to quaternary structure, homodimer. The cofactor is Mg(2+).

The protein resides in the cytoplasm. The catalysed reaction is IMP + L-aspartate + GTP = N(6)-(1,2-dicarboxyethyl)-AMP + GDP + phosphate + 2 H(+). Its pathway is purine metabolism; AMP biosynthesis via de novo pathway; AMP from IMP: step 1/2. In terms of biological role, plays an important role in the de novo pathway and in the salvage pathway of purine nucleotide biosynthesis. Catalyzes the first committed step in the biosynthesis of AMP from IMP. The polypeptide is Adenylosuccinate synthetase (Uncinocarpus reesii (strain UAMH 1704)).